The sequence spans 87 residues: Phosphoribosyl-ATP pyrophosphatase (87 aa).

This sequence belongs to the PRA-PH family.

It is found in the cytoplasm. The enzyme catalyses 1-(5-phospho-beta-D-ribosyl)-ATP + H2O = 1-(5-phospho-beta-D-ribosyl)-5'-AMP + diphosphate + H(+). The protein operates within amino-acid biosynthesis; L-histidine biosynthesis; L-histidine from 5-phospho-alpha-D-ribose 1-diphosphate: step 2/9. The chain is Phosphoribosyl-ATP pyrophosphatase from Leifsonia xyli subsp. xyli (strain CTCB07).